The primary structure comprises 452 residues: Trigger factor (452 aa).

The region spanning 171 to 256 (GDRVKVNFKG…ATAIETPEEK (86 aa)) is the PPIase FKBP-type domain.

It belongs to the FKBP-type PPIase family. Tig subfamily.

The protein resides in the cytoplasm. The enzyme catalyses [protein]-peptidylproline (omega=180) = [protein]-peptidylproline (omega=0). Involved in protein export. Acts as a chaperone by maintaining the newly synthesized protein in an open conformation. Functions as a peptidyl-prolyl cis-trans isomerase. The sequence is that of Trigger factor from Bradyrhizobium sp. (strain BTAi1 / ATCC BAA-1182).